The following is a 185-amino-acid chain: Ribosome-recycling factor (185 aa).

It belongs to the RRF family.

It localises to the cytoplasm. Its function is as follows. Responsible for the release of ribosomes from messenger RNA at the termination of protein biosynthesis. May increase the efficiency of translation by recycling ribosomes from one round of translation to another. The sequence is that of Ribosome-recycling factor from Actinobacillus succinogenes (strain ATCC 55618 / DSM 22257 / CCUG 43843 / 130Z).